A 65-amino-acid polypeptide reads, in one-letter code: Large ribosomal subunit protein bL35 (65 aa).

Composition is skewed to basic residues over residues M1–T15 and Q26–L44. Residues M1–A65 form a disordered region.

The protein belongs to the bacterial ribosomal protein bL35 family.

This chain is Large ribosomal subunit protein bL35, found in Cupriavidus metallidurans (strain ATCC 43123 / DSM 2839 / NBRC 102507 / CH34) (Ralstonia metallidurans).